Reading from the N-terminus, the 747-residue chain is Probable alpha-galactosidase C (747 aa).

Residues 1-24 (MVAFMNSATFVAGLFTLWSRPIWA) form the signal peptide. Asparagine 36, asparagine 182, asparagine 190, asparagine 362, asparagine 429, and asparagine 449 each carry an N-linked (GlcNAc...) asparagine glycan. The Nucleophile role is filled by aspartate 507. The N-linked (GlcNAc...) asparagine glycan is linked to asparagine 534. Residue aspartate 569 is the Proton donor of the active site.

This sequence belongs to the glycosyl hydrolase 36 family. Homotetramer. It depends on Mg(2+) as a cofactor. NAD(+) serves as cofactor.

It localises to the secreted. The catalysed reaction is Hydrolysis of terminal, non-reducing alpha-D-galactose residues in alpha-D-galactosides, including galactose oligosaccharides, galactomannans and galactolipids.. In terms of biological role, hydrolyzes a variety of simple alpha-D-galactoside as well as more complex molecules such as oligosaccharides and polysaccharides. This is Probable alpha-galactosidase C (aglC) from Aspergillus terreus (strain NIH 2624 / FGSC A1156).